We begin with the raw amino-acid sequence, 344 residues long: Large ribosomal subunit protein uL3 (344 aa).

It belongs to the universal ribosomal protein uL3 family. Part of the 50S ribosomal subunit. Forms a cluster with proteins L14 and L24e.

One of the primary rRNA binding proteins, it binds directly near the 3'-end of the 23S rRNA, where it nucleates assembly of the 50S subunit. This Aeropyrum pernix (strain ATCC 700893 / DSM 11879 / JCM 9820 / NBRC 100138 / K1) protein is Large ribosomal subunit protein uL3.